Reading from the N-terminus, the 248-residue chain is MKNNYTSLKSSIDKEDELKSVHEIDLEKGLLPEYNSDEESTLPPYSDHARVSNPPNTHRENHSSGTTDNSSPFLIKLLISFTSIILFNAPAVCYLKYKDAFFKNYGAAEWTLIGFWCASSLIIFTFSWYFYETWTKAVGKGIKHFLKKWRNIPMAFSEVFLFNILVGSPRVTLRHISGERWGLKCSLADHIIFAILSILVFIVETVEPGSSKINIMKRLRGDNARDATQHVNEYTAVPLREMNPESEA.

Residues 30–68 (LLPEYNSDEESTLPPYSDHARVSNPPNTHRENHSSGTTD) form a disordered region. A run of 4 helical transmembrane segments spans residues 73–93 (FLIKLLISFTSIILFNAPAVC), 110–130 (WTLIGFWCASSLIIFTFSWYF), 152–172 (IPMAFSEVFLFNILVGSPRVT), and 186–206 (SLADHIIFAILSILVFIVETV).

Belongs to the WTF family. In terms of assembly, homomer. Interacts with other proteins that exhibit high sequence similarity.

It is found in the spore membrane. The protein localises to the vacuole membrane. Acts as a suppressor component of the dual wtf meiotic drive system, and can suppress but not confer meiotic drive by compatible poisons. Wtf meiotic drive systems promote unequal transmission of alleles from the parental zygote to progeny spores by encoding a poison and an antidote from the same locus; the poison is trans-acting and forms toxic aggregates in all spores within an ascus, wherease the antidote is spore-specific and targets aggregates for degradation by the vacuole. Meiotic drive by wtf systems therefore lead to poisoning of all progeny that do not inherit the dual poison/antidote allele, or express a compatible antidote. The protein is Meiotic drive suppressor wtf1 of Schizosaccharomyces pombe (Fission yeast).